A 71-amino-acid chain; its full sequence is Cytochrome c oxidase subunit 8C, mitochondrial (71 aa).

Residues 1–28 constitute a mitochondrion transit peptide; sequence MAHLPRVCPFIRRLRVALLCLRPGHRFA. Topologically, residues 29 to 39 are mitochondrial matrix; sequence HSEPQRQRPAS. A helical transmembrane segment spans residues 40–63; that stretch reads ALEMAVGIVVIFSAFLTPSAYVLS. At 64–71 the chain is on the mitochondrial intermembrane side; sequence NLSQFRRE.

This sequence belongs to the cytochrome c oxidase VIII family. As to quaternary structure, component of the cytochrome c oxidase (complex IV, CIV), a multisubunit enzyme composed of 14 subunits. The complex is composed of a catalytic core of 3 subunits MT-CO1, MT-CO2 and MT-CO3, encoded in the mitochondrial DNA, and 11 supernumerary subunits COX4I, COX5A, COX5B, COX6A, COX6B, COX6C, COX7A, COX7B, COX7C, COX8 and NDUFA4, which are encoded in the nuclear genome. The complex exists as a monomer or a dimer and forms supercomplexes (SCs) in the inner mitochondrial membrane with NADH-ubiquinone oxidoreductase (complex I, CI) and ubiquinol-cytochrome c oxidoreductase (cytochrome b-c1 complex, complex III, CIII), resulting in different assemblies (supercomplex SCI(1)III(2)IV(1) and megacomplex MCI(2)III(2)IV(2)).

Its subcellular location is the mitochondrion inner membrane. Its pathway is energy metabolism; oxidative phosphorylation. Component of the cytochrome c oxidase, the last enzyme in the mitochondrial electron transport chain which drives oxidative phosphorylation. The respiratory chain contains 3 multisubunit complexes succinate dehydrogenase (complex II, CII), ubiquinol-cytochrome c oxidoreductase (cytochrome b-c1 complex, complex III, CIII) and cytochrome c oxidase (complex IV, CIV), that cooperate to transfer electrons derived from NADH and succinate to molecular oxygen, creating an electrochemical gradient over the inner membrane that drives transmembrane transport and the ATP synthase. Cytochrome c oxidase is the component of the respiratory chain that catalyzes the reduction of oxygen to water. Electrons originating from reduced cytochrome c in the intermembrane space (IMS) are transferred via the dinuclear copper A center (CU(A)) of subunit 2 and heme A of subunit 1 to the active site in subunit 1, a binuclear center (BNC) formed by heme A3 and copper B (CU(B)). The BNC reduces molecular oxygen to 2 water molecules using 4 electrons from cytochrome c in the IMS and 4 protons from the mitochondrial matrix. This Eulemur fulvus fulvus (Brown lemur) protein is Cytochrome c oxidase subunit 8C, mitochondrial (COX8C).